The primary structure comprises 314 residues: Olfactory receptor 1 (314 aa).

Residues 1 to 29 (MTERNQTVISQFLLLGLPIPPEHQHVFYA) lie on the Extracellular side of the membrane. The N-linked (GlcNAc...) asparagine glycan is linked to Asn-5. The helical transmembrane segment at 30 to 50 (LFLSMYLTTVLGNLIIIILIL) threads the bilayer. The Cytoplasmic segment spans residues 51-59 (LDSHLHTPM). Residues 60–81 (YLFLSNLSFSDLCFSSVTMPKL) form a helical membrane-spanning segment. Residues 82–97 (LQNMQSQVPSIPYAGC) are Extracellular-facing. Cys-97 and Cys-179 are oxidised to a cystine. A helical membrane pass occupies residues 98–118 (LSQIYFFLFFGDLGNFLLVAM). Residues 119–143 (AYDRYVAICFPLHYMSIMSPKLCVS) are Cytoplasmic-facing. The helical transmembrane segment at 144 to 164 (LVVLSWVLTTFHAMLHTLLMA) threads the bilayer. Residues 165–196 (RLSFCEDNVIPHFFCDMSALLKLACSDTRVNE) lie on the Extracellular side of the membrane. The helical transmembrane segment at 197–217 (VVIFIVVSLFLVLPFALIIMS) threads the bilayer. At 218–240 (YVRIVSSILKVPSSQGIYKAFST) the chain is on the cytoplasmic side. Residues 241-261 (CGSHLSVVSLFYGTVIGLYLC) traverse the membrane as a helical segment. The Extracellular segment spans residues 262–271 (PSSNNSTVKE). N-linked (GlcNAc...) asparagine glycosylation is found at Asn-265 and Asn-266. A helical transmembrane segment spans residues 272 to 292 (TVMSLMYTVVTPMLNPFIYSL). Residues 293–314 (RNRDIKGAMERIFCKRKIQLNL) lie on the Cytoplasmic side of the membrane.

The protein belongs to the G-protein coupled receptor 1 family. Olfactory epithelium.

The protein localises to the cell membrane. Functionally, odorant receptor. Activated by a lily-derived aldehyde as well as other odorants. May signal through an inositol 1,4,5-trisphosphate (IP3) second messenger system. In Rattus norvegicus (Rat), this protein is Olfactory receptor 1.